The chain runs to 101 residues: NADH-quinone oxidoreductase subunit K (101 aa).

3 helical membrane-spanning segments follow: residues 4–24 (LAHFLVLGAILFAISIVGIFL), 30–50 (IVLLMALELLLLAVNMNFVAF), and 61–81 (VFVFFILTVAAAESAIGLAIL).

This sequence belongs to the complex I subunit 4L family. NDH-1 is composed of 14 different subunits. Subunits NuoA, H, J, K, L, M, N constitute the membrane sector of the complex.

It localises to the cell inner membrane. The catalysed reaction is a quinone + NADH + 5 H(+)(in) = a quinol + NAD(+) + 4 H(+)(out). NDH-1 shuttles electrons from NADH, via FMN and iron-sulfur (Fe-S) centers, to quinones in the respiratory chain. The immediate electron acceptor for the enzyme in this species is believed to be ubiquinone. Couples the redox reaction to proton translocation (for every two electrons transferred, four hydrogen ions are translocated across the cytoplasmic membrane), and thus conserves the redox energy in a proton gradient. The chain is NADH-quinone oxidoreductase subunit K from Cupriavidus metallidurans (strain ATCC 43123 / DSM 2839 / NBRC 102507 / CH34) (Ralstonia metallidurans).